Consider the following 234-residue polypeptide: Superoxide dismutase [Mn], mitochondrial (234 aa).

Residues 1 to 34 (MFSIRSSSRVLLKASSATTRATLNAAASKTFTRS) constitute a mitochondrion transit peptide. Residues His60, His108, Asp198, and His202 each coordinate Mn(2+).

This sequence belongs to the iron/manganese superoxide dismutase family. As to quaternary structure, homotetramer. The cofactor is Mn(2+).

The protein localises to the mitochondrion matrix. It catalyses the reaction 2 superoxide + 2 H(+) = H2O2 + O2. Destroys superoxide anion radicals which are normally produced within the cells and which are toxic to biological systems. The sequence is that of Superoxide dismutase [Mn], mitochondrial (SOD2) from Candida albicans (Yeast).